The primary structure comprises 309 residues: MLCRSNDELELLISQARAFAGQGEVAQYIPALAAAHKHELSVALYYPDGKGFMAGDTEENFTLQSISKVLSLALALIDQGEECVFTRVGKEPTGDPFNSIAKLETNKPSKPLNPMINAGALAVTHMIKGNTAGERFERLLDFIRCLTGNETITYNKEIAKSEFETAHLNRALVYFMKEHGVIDEDVEELMDLYTKQCAIEMNCIDLARVGCVLAMDGCDPDTGKQLLPIDVARICKTFMVTCGMYNASGEFAINVGIPAKSGVSGGIMGAVPKKCGIGICGPSLDEKGNSIAGIKLLEMMAKRYSLSMF.

The substrate site is built by Ser65, Asn117, Glu162, Asn169, Tyr193, Tyr245, and Val263.

The protein belongs to the glutaminase family. In terms of assembly, homotetramer.

It catalyses the reaction L-glutamine + H2O = L-glutamate + NH4(+). The polypeptide is Glutaminase (Shouchella clausii (strain KSM-K16) (Alkalihalobacillus clausii)).